The chain runs to 100 residues: Flagellar transcriptional regulator FlhD (100 aa).

It belongs to the FlhD family. Homodimer; disulfide-linked. Forms a heterohexamer composed of two FlhC and four FlhD subunits. Each FlhC binds a FlhD dimer, forming a heterotrimer, and a hexamer assembles by dimerization of two heterotrimers.

It localises to the cytoplasm. Functions in complex with FlhC as a master transcriptional regulator that regulates transcription of several flagellar and non-flagellar operons by binding to their promoter region. Activates expression of class 2 flagellar genes, including fliA, which is a flagellum-specific sigma factor that turns on the class 3 genes. Also regulates genes whose products function in a variety of physiological pathways. The chain is Flagellar transcriptional regulator FlhD from Ralstonia pickettii (strain 12D).